Reading from the N-terminus, the 344-residue chain is Nicotinate-nucleotide--dimethylbenzimidazole phosphoribosyltransferase (344 aa).

The active-site Proton acceptor is the Glu-310.

This sequence belongs to the CobT family.

It catalyses the reaction 5,6-dimethylbenzimidazole + nicotinate beta-D-ribonucleotide = alpha-ribazole 5'-phosphate + nicotinate + H(+). Its pathway is nucleoside biosynthesis; alpha-ribazole biosynthesis; alpha-ribazole from 5,6-dimethylbenzimidazole: step 1/2. In terms of biological role, catalyzes the synthesis of alpha-ribazole-5'-phosphate from nicotinate mononucleotide (NAMN) and 5,6-dimethylbenzimidazole (DMB). This is Nicotinate-nucleotide--dimethylbenzimidazole phosphoribosyltransferase from Shewanella amazonensis (strain ATCC BAA-1098 / SB2B).